The chain runs to 329 residues: NADH-quinone oxidoreductase subunit H 1 (329 aa).

8 consecutive transmembrane segments (helical) span residues 12–32 (LAKI…LVFA), 78–98 (WLFY…FAVI), 120–140 (VGLL…ALGG), 159–179 (LISY…LAGS), 191–211 (GIWF…SIAA), 242–262 (LFFV…TTFF), 270–290 (WLPP…FFIW), and 308–328 (WKVL…ILML).

The protein belongs to the complex I subunit 1 family. NDH-1 is composed of 14 different subunits. Subunits NuoA, H, J, K, L, M, N constitute the membrane sector of the complex.

The protein localises to the cell inner membrane. The catalysed reaction is a quinone + NADH + 5 H(+)(in) = a quinol + NAD(+) + 4 H(+)(out). In terms of biological role, NDH-1 shuttles electrons from NADH, via FMN and iron-sulfur (Fe-S) centers, to quinones in the respiratory chain. The immediate electron acceptor for the enzyme in this species is believed to be ubiquinone. Couples the redox reaction to proton translocation (for every two electrons transferred, four hydrogen ions are translocated across the cytoplasmic membrane), and thus conserves the redox energy in a proton gradient. This subunit may bind ubiquinone. In Geobacter metallireducens (strain ATCC 53774 / DSM 7210 / GS-15), this protein is NADH-quinone oxidoreductase subunit H 1.